A 152-amino-acid polypeptide reads, in one-letter code: UPF0266 membrane protein YobD (152 aa).

3 consecutive transmembrane segments (helical) span residues 6–26, 45–65, and 67–87; these read LVLILFIAALLAFAIYDQFIM, IDSVIFVGLIVILIYNNVTNH, and ALITTWLLSALALMGFYIFWI.

It belongs to the UPF0266 family.

Its subcellular location is the cell inner membrane. This Escherichia coli O45:K1 (strain S88 / ExPEC) protein is UPF0266 membrane protein YobD.